An 88-amino-acid chain; its full sequence is MGTARFLSAVLLLSVLLMVTFPALLSAEYHDGRVDICSLPSDSGDCLRLFEMWYFDGTTCTKFVYGGYGGNDNRFPTEKACMKRCAKV.

A signal peptide spans 1–27 (MGTARFLSAVLLLSVLLMVTFPALLSA). Residues 28–33 (EYHDGR) constitute a propeptide that is removed on maturation. The region spanning 37-85 (CSLPSDSGDCLRLFEMWYFDGTTCTKFVYGGYGGNDNRFPTEKACMKRC) is the BPTI/Kunitz inhibitor domain. Intrachain disulfides connect C37–C85 and C60–C81.

Belongs to the venom Kunitz-type family. 03 (sub-Kunitz) subfamily. Expressed by the venom gland.

It is found in the secreted. Its function is as follows. Serine protease inhibitor that inhibits trypsin at a molar ratio of 1:1. The polypeptide is Kunitz-type U15-theraphotoxin-Hs1f (Cyriopagopus schmidti (Chinese bird spider)).